An 880-amino-acid polypeptide reads, in one-letter code: Leucine--tRNA ligase (880 aa).

The 'HIGH' region signature appears at 49–59; sequence PYPSGRIHMGH. The 'KMSKS' region motif lies at 638–642; that stretch reads KMSKS. Residue lysine 641 participates in ATP binding.

This sequence belongs to the class-I aminoacyl-tRNA synthetase family.

The protein localises to the cytoplasm. The enzyme catalyses tRNA(Leu) + L-leucine + ATP = L-leucyl-tRNA(Leu) + AMP + diphosphate. This chain is Leucine--tRNA ligase, found in Bartonella henselae (strain ATCC 49882 / DSM 28221 / CCUG 30454 / Houston 1) (Rochalimaea henselae).